Here is a 122-residue protein sequence, read N- to C-terminus: uncharacterized protein (122 aa).

Positions 46–116 (KDLQKEVDDL…HQLENKRELN (71 aa)) form a coiled coil.

This is an uncharacterized protein from Invertebrate iridescent virus 6 (IIV-6).